A 548-amino-acid polypeptide reads, in one-letter code: Glucose-6-phosphate isomerase (548 aa).

E355 serves as the catalytic Proton donor. Catalysis depends on residues H386 and K514.

The protein belongs to the GPI family.

It is found in the cytoplasm. It carries out the reaction alpha-D-glucose 6-phosphate = beta-D-fructose 6-phosphate. It participates in carbohydrate biosynthesis; gluconeogenesis. It functions in the pathway carbohydrate degradation; glycolysis; D-glyceraldehyde 3-phosphate and glycerone phosphate from D-glucose: step 2/4. Functionally, catalyzes the reversible isomerization of glucose-6-phosphate to fructose-6-phosphate. This Hamiltonella defensa subsp. Acyrthosiphon pisum (strain 5AT) protein is Glucose-6-phosphate isomerase.